The primary structure comprises 338 residues: Phenylalanine--tRNA ligase alpha subunit (338 aa).

Glutamate 252 lines the Mg(2+) pocket.

The protein belongs to the class-II aminoacyl-tRNA synthetase family. Phe-tRNA synthetase alpha subunit type 1 subfamily. In terms of assembly, tetramer of two alpha and two beta subunits. It depends on Mg(2+) as a cofactor.

The protein localises to the cytoplasm. The catalysed reaction is tRNA(Phe) + L-phenylalanine + ATP = L-phenylalanyl-tRNA(Phe) + AMP + diphosphate + H(+). The sequence is that of Phenylalanine--tRNA ligase alpha subunit from Pseudomonas syringae pv. tomato (strain ATCC BAA-871 / DC3000).